Reading from the N-terminus, the 340-residue chain is Replication initiation protein (340 aa).

The tract at residues 38–58 (PERKRTKRRRGEHSTKPKCEN) is disordered.

This Escherichia coli protein is Replication initiation protein (repA1).